Reading from the N-terminus, the 601-residue chain is UvrABC system protein C (601 aa).

The region spanning 17 to 95 (TLPGVYRMLD…IKALAPRYNI (79 aa)) is the GIY-YIG domain. Positions 204–239 (SELINELTRRMTAAAEAMAFEQAAELRDQIQALARV) constitute a UVR domain.

It belongs to the UvrC family. As to quaternary structure, interacts with UvrB in an incision complex.

It localises to the cytoplasm. Its function is as follows. The UvrABC repair system catalyzes the recognition and processing of DNA lesions. UvrC both incises the 5' and 3' sides of the lesion. The N-terminal half is responsible for the 3' incision and the C-terminal half is responsible for the 5' incision. This Chromobacterium violaceum (strain ATCC 12472 / DSM 30191 / JCM 1249 / CCUG 213 / NBRC 12614 / NCIMB 9131 / NCTC 9757 / MK) protein is UvrABC system protein C.